The sequence spans 87 residues: UPF0250 protein Ent638_1166 (87 aa).

Belongs to the UPF0250 family.

The protein is UPF0250 protein Ent638_1166 of Enterobacter sp. (strain 638).